A 160-amino-acid polypeptide reads, in one-letter code: Cytochrome b6-f complex subunit 4 (160 aa).

A run of 3 helical transmembrane segments spans residues 36–56 (LLYI…GLAV), 95–115 (LLGV…PFLE), and 131–151 (TVFL…TLPI).

Belongs to the cytochrome b family. PetD subfamily. As to quaternary structure, the 4 large subunits of the cytochrome b6-f complex are cytochrome b6, subunit IV (17 kDa polypeptide, petD), cytochrome f and the Rieske protein, while the 4 small subunits are petG, petL, petM and petN. The complex functions as a dimer.

The protein resides in the plastid. Its subcellular location is the chloroplast thylakoid membrane. Component of the cytochrome b6-f complex, which mediates electron transfer between photosystem II (PSII) and photosystem I (PSI), cyclic electron flow around PSI, and state transitions. The chain is Cytochrome b6-f complex subunit 4 from Morus indica (Mulberry).